A 284-amino-acid chain; its full sequence is Hydrogenase expression/formation protein HupQ (284 aa).

The interval 1–23 (MIGTQSILPPGFGPGSHGEEDRL) is disordered.

It belongs to the HupH/HyaF family.

The chain is Hydrogenase expression/formation protein HupQ (hupQ) from Azotobacter chroococcum mcd 1.